An 86-amino-acid chain; its full sequence is Small ribosomal subunit protein eS27y (86 aa).

The segment at 39-61 adopts a C4-type zinc-finger fold; the sequence is CQGCFNITTVFSHSQTVVVCGNC.

Belongs to the eukaryotic ribosomal protein eS27 family. Requires Zn(2+) as cofactor.

Its function is as follows. May be involved in the elimination of damaged mRNA after UV irradiation. The polypeptide is Small ribosomal subunit protein eS27y (RPS27B) (Arabidopsis thaliana (Mouse-ear cress)).